A 217-amino-acid polypeptide reads, in one-letter code: LSM12 homolog A (217 aa).

Residues 9–78 form the Sm domain; sequence VNAVNDCFSI…CSNVQVIKEC (70 aa). Residues 86-184 enclose the AD domain; the sequence is QKLNLEQVKM…IIKQFFNTRP (99 aa). Positions 185–217 are disordered; the sequence is SPVPESGAAASTSSPSVSPTSSSLASGSPVPAN. Low complexity predominate over residues 190–217; it reads SGAAASTSSPSVSPTSSSLASGSPVPAN.

Belongs to the LSM12 family. Component of the Atx2-tyf activator complex, composed of Atx2, tyf, pAbp, Lsm12a. Interacts with tyf, Atx2 and pAbp.

Its function is as follows. Component of the Atx2-tyf activator complex which functions in the circadian pacemaker neurons to activate the TYF-dependent translation of per and maintain 24 hour periodicity in circadian behaviors. Within the Atx2-tyf complex, likely to function as a molecular adapter which stabilizes the interaction between Atx2 and the translational regulator tyf. The protein is LSM12 homolog A of Drosophila melanogaster (Fruit fly).